The primary structure comprises 34 residues: GFWKKVGSAAWGGVKAAAKGAAVGGLNALAKHIQ.

In terms of biological role, has strong antibacterial activity against the Gram-positive bacteria M.luteus, S.aureus, B.megaterium, A.viridans and E.faecalis, and against the Gram-negative bacteria K.pneumoniae, E.coli DH5alpha, S.typhimurium, P.aeruginosa and E.aerogenes. Lacks hemolytic activity against sheep erythrocytes. This is Papillosin from Halocynthia papillosa (Red sea-squirt).